The following is a 255-amino-acid chain: Putative deoxyribonuclease tatdn3-B (255 aa).

Residues His-11, His-13, Glu-106, His-129, His-152, and Asp-199 each contribute to the Zn(2+) site.

The protein belongs to the metallo-dependent hydrolases superfamily. TatD-type hydrolase family. Requires Mn(2+) as cofactor. The cofactor is Ca(2+). It depends on Mg(2+) as a cofactor. Zn(2+) is required as a cofactor.

The protein resides in the nucleus. Its activity is regulated as follows. The 3'-exonuclease activity is sensitive to the metal ion present in the active site, whereas the AP endodeoxyribonuclease activity is observed in a variety of divalent metal cofactors. 3'-exoxonuclease activity is suppressed in the presence of Ca(2+), Zn(2+) and Ni(2+). In terms of biological role, exhibits 3'-exonuclease activities and apurinic/apyrimidinic (AP) endonuclease (in vitro). Show preferential AP endonuclease activity on double-stranded DNA substrates and 3'- exonuclease activity on single-stranded DNA. This chain is Putative deoxyribonuclease tatdn3-B (tatdn3-b), found in Xenopus laevis (African clawed frog).